The primary structure comprises 188 residues: MSIKSDKWIRRMAEQHGMIEPFEPGQIRENDGRKIISYGTSSYGYDIRCAPEFKVFTNIHSTVVDPKHFDEKSFVDFHGDSCIIPPNSFALARTVEYFRIPRNVLTICLGKSTYARCGIIVNVTPFEPEWEGYVTLEFSNTTPLPARIYAGEGCAQVLFFESDEVCEVSYRDRGGKYQGQVGVTLPKA.

Residues 111 to 116 (KSTYAR), 135 to 137 (TLE), Gln-156, Tyr-170, and Gln-180 each bind dCTP. Catalysis depends on Glu-137, which acts as the Proton donor/acceptor.

This sequence belongs to the dCTP deaminase family. In terms of assembly, homotrimer.

It carries out the reaction dCTP + H2O + H(+) = dUTP + NH4(+). The protein operates within pyrimidine metabolism; dUMP biosynthesis; dUMP from dCTP (dUTP route): step 1/2. Catalyzes the deamination of dCTP to dUTP. This chain is dCTP deaminase, found in Paracidovorax citrulli (strain AAC00-1) (Acidovorax citrulli).